Reading from the N-terminus, the 381-residue chain is MSWTVGILRASQRAGTVRANFLCLGMAPSPCPPAATPLGGAWAVAPASKMATVKCELMKNFTSEEPVRNSKISIVGTGSVGMACAVSILLKGLSDELALVDVDEGRLKGETMDLQHGSLFVKMPNIVSSRDYVVTANSNLVIITAGARQEKGETRLNLVQRNVAIFKLMMSSIVQYSPRCKLIVVSNPVDILTYVAWKLSAFPQNRVIGSGCNLDTARFRFLIGQRLSIHSESCHGWILGEHGDSSVPVWSGVNIAGVPLKELNLDIGTDKDPEQWKNVHKDVVASAYEIIKMKGYTYWAIGLSVADLTESILKNLRRVHPVSTRIKGLYGINEEVFLSVPCILGESGITDLIKVKLAPEEEARLQKSAKTLWDIQKELKF.

Residues 101-106 (DVDEGR) and arginine 148 each bind NAD(+). 3 residues coordinate substrate: arginine 155, asparagine 187, and arginine 218. Asparagine 187 lines the NAD(+) pocket. Histidine 242 (proton acceptor) is an active-site residue. Position 297 (threonine 297) interacts with substrate.

It belongs to the LDH/MDH superfamily. LDH family.

The catalysed reaction is (S)-lactate + NAD(+) = pyruvate + NADH + H(+). It participates in fermentation; pyruvate fermentation to lactate; (S)-lactate from pyruvate: step 1/1. This Bos taurus (Bovine) protein is L-lactate dehydrogenase A-like 6B (LDHAL6B).